Consider the following 312-residue polypeptide: Ribonuclease HIII (312 aa).

The RNase H type-2 domain occupies 95–311; sequence FNCIGSDEAG…REKAQKILKP (217 aa). Residues Asp-101, Glu-102, and Asp-206 each coordinate a divalent metal cation.

It belongs to the RNase HII family. RnhC subfamily. It depends on Mn(2+) as a cofactor. Mg(2+) serves as cofactor.

The protein resides in the cytoplasm. It carries out the reaction Endonucleolytic cleavage to 5'-phosphomonoester.. In terms of biological role, endonuclease that specifically degrades the RNA of RNA-DNA hybrids. The polypeptide is Ribonuclease HIII (Staphylococcus aureus (strain MSSA476)).